The sequence spans 89 residues: Small ribosomal subunit protein uS15 (89 aa).

The protein belongs to the universal ribosomal protein uS15 family. In terms of assembly, part of the 30S ribosomal subunit. Forms a bridge to the 50S subunit in the 70S ribosome, contacting the 23S rRNA.

In terms of biological role, one of the primary rRNA binding proteins, it binds directly to 16S rRNA where it helps nucleate assembly of the platform of the 30S subunit by binding and bridging several RNA helices of the 16S rRNA. Its function is as follows. Forms an intersubunit bridge (bridge B4) with the 23S rRNA of the 50S subunit in the ribosome. The polypeptide is Small ribosomal subunit protein uS15 (Herminiimonas arsenicoxydans).